A 594-amino-acid polypeptide reads, in one-letter code: UvrABC system protein C (594 aa).

In terms of domain architecture, GIY-YIG spans 14 to 91 (DKPGCYLMKD…IKKHDPKYNV (78 aa)). The UVR domain occupies 196 to 231 (SDIKEQLRERMEKAAEDLDFERAKELRDTIAQMEKV).

This sequence belongs to the UvrC family. In terms of assembly, interacts with UvrB in an incision complex.

Its subcellular location is the cytoplasm. Its function is as follows. The UvrABC repair system catalyzes the recognition and processing of DNA lesions. UvrC both incises the 5' and 3' sides of the lesion. The N-terminal half is responsible for the 3' incision and the C-terminal half is responsible for the 5' incision. The sequence is that of UvrABC system protein C from Shouchella clausii (strain KSM-K16) (Alkalihalobacillus clausii).